We begin with the raw amino-acid sequence, 124 residues long: Fluoride-specific ion channel FluC (124 aa).

4 helical membrane passes run 4–24 (LLLV…ISIF), 35–55 (FGTL…YALG), 60–80 (ISPE…TTFS), and 102–122 (VVLN…LVFS). Na(+) contacts are provided by G74 and T77.

Belongs to the fluoride channel Fluc/FEX (TC 1.A.43) family.

The protein resides in the cell inner membrane. The enzyme catalyses fluoride(in) = fluoride(out). With respect to regulation, na(+) is not transported, but it plays an essential structural role and its presence is essential for fluoride channel function. Functionally, fluoride-specific ion channel. Important for reducing fluoride concentration in the cell, thus reducing its toxicity. In Shewanella sp. (strain ANA-3), this protein is Fluoride-specific ion channel FluC.